Reading from the N-terminus, the 338-residue chain is Phenylalanine--tRNA ligase alpha subunit (338 aa).

Glutamate 252 lines the Mg(2+) pocket.

Belongs to the class-II aminoacyl-tRNA synthetase family. Phe-tRNA synthetase alpha subunit type 1 subfamily. In terms of assembly, tetramer of two alpha and two beta subunits. The cofactor is Mg(2+).

The protein resides in the cytoplasm. It catalyses the reaction tRNA(Phe) + L-phenylalanine + ATP = L-phenylalanyl-tRNA(Phe) + AMP + diphosphate + H(+). In Pseudomonas paraeruginosa (strain DSM 24068 / PA7) (Pseudomonas aeruginosa (strain PA7)), this protein is Phenylalanine--tRNA ligase alpha subunit.